Consider the following 122-residue polypeptide: Large ribosomal subunit protein uL14c (122 aa).

The protein belongs to the universal ribosomal protein uL14 family. In terms of assembly, part of the 50S ribosomal subunit.

Its subcellular location is the plastid. The protein localises to the chloroplast. Its function is as follows. Binds to 23S rRNA. This chain is Large ribosomal subunit protein uL14c, found in Glycine max (Soybean).